Here is a 467-residue protein sequence, read N- to C-terminus: ATP synthase subunit beta, chloroplastic (467 aa).

Gly-149–Thr-156 lines the ATP pocket.

The protein belongs to the ATPase alpha/beta chains family. In terms of assembly, F-type ATPases have 2 components, CF(1) - the catalytic core - and CF(0) - the membrane proton channel. CF(1) has five subunits: alpha(3), beta(3), gamma(1), delta(1), epsilon(1). CF(0) has four main subunits: a(1), b(1), b'(1) and c(9-12).

The protein resides in the plastid. The protein localises to the chloroplast thylakoid membrane. The catalysed reaction is ATP + H2O + 4 H(+)(in) = ADP + phosphate + 5 H(+)(out). Produces ATP from ADP in the presence of a proton gradient across the membrane. The catalytic sites are hosted primarily by the beta subunits. This Cyanidioschyzon merolae (strain NIES-3377 / 10D) (Unicellular red alga) protein is ATP synthase subunit beta, chloroplastic.